Consider the following 100-residue polypeptide: NADH-quinone oxidoreductase subunit K (100 aa).

Helical transmembrane passes span 4-24, 29-49, and 60-80; these read LSYSLSLAAILFMLGLTGIMI, LFLLLGLEIMINAAALAFVIV, and VMYILTVTIAATEASIGLALL.

Belongs to the complex I subunit 4L family. NDH-1 is composed of 14 different subunits. Subunits NuoA, H, J, K, L, M, N constitute the membrane sector of the complex.

The protein localises to the cell membrane. It catalyses the reaction a quinone + NADH + 5 H(+)(in) = a quinol + NAD(+) + 4 H(+)(out). Its function is as follows. NDH-1 shuttles electrons from NADH, via FMN and iron-sulfur (Fe-S) centers, to quinones in the respiratory chain. The immediate electron acceptor for the enzyme in this species is believed to be ubiquinone. Couples the redox reaction to proton translocation (for every two electrons transferred, four hydrogen ions are translocated across the cytoplasmic membrane), and thus conserves the redox energy in a proton gradient. The protein is NADH-quinone oxidoreductase subunit K of Baumannia cicadellinicola subsp. Homalodisca coagulata.